The chain runs to 77 residues: U-actitoxin-Avd12a (77 aa).

The signal sequence occupies residues 1–23; it reads MALFRMLFLCAVLVLLTSKEGMS. Residues 24–29 constitute a propeptide that is removed on maturation; it reads YEEPEN. The EGF-like domain occupies 31 to 73; that stretch reads EGVACTGQYAESFCLNGGTCRYIQSIGEYYCICNGDYTGHRCE. 3 disulfides stabilise this stretch: Cys35–Cys50, Cys44–Cys61, and Cys63–Cys72.

Belongs to the EGF domain peptide family.

Its subcellular location is the secreted. The protein resides in the nematocyst. Its function is as follows. Has both toxic and EGF activity. Its EGF activity consists of rounding cells (morphological change) and inducing tyrosine phosphorylation of the EGFR in A431 cells, but with a lower potency that human EGF. This chain is U-actitoxin-Avd12a, found in Anemonia viridis (Snakelocks anemone).